We begin with the raw amino-acid sequence, 740 residues long: Melanoma-associated antigen D4 (740 aa).

Residues 1 to 11 (MAEGSYRKESE) show a composition bias toward basic and acidic residues. Disordered stretches follow at residues 1–27 (MAEG…EVGE), 139–208 (ATHQ…GPST), 242–298 (PAGV…ALAK), and 321–377 (IPEP…ASQP). Acidic residues predominate over residues 14-27 (NVEDMDEGSDEVGE). Polar residues-rich tracts occupy residues 141 to 155 (HQAS…TSAA) and 162 to 175 (PETS…SRML). The segment covering 185-207 (APARSPQPQTSSQAQEAAAEGPS) has biased composition (low complexity). Positions 321-337 (IPEPESAAATSQQSAEP) are enriched in low complexity. The segment covering 354-363 (DEYESGEEER) has biased composition (acidic residues). An MAGE domain is found at 414–612 (LQERANKLVK…REWRAHFLEA (199 aa)). Residues 697–722 (WRAGVSSGTNGAASASMLDGPSTSST) form a disordered region.

As to quaternary structure, interacts with TRIM27.

In terms of biological role, may enhance ubiquitin ligase activity of RING-type zinc finger-containing E3 ubiquitin-protein ligases. Proposed to act through recruitment and/or stabilization of the Ubl-conjugating enzyme (E2) at the E3:substrate complex. In Bos taurus (Bovine), this protein is Melanoma-associated antigen D4 (MAGED4).